Here is a 404-residue protein sequence, read N- to C-terminus: Putative CBL-interacting protein kinase 27 (404 aa).

The Protein kinase domain maps to 11–266; the sequence is YEMGRVLGHG…VAGLLETPWF (256 aa). Residues 17–25 and K40 each bind ATP; that span reads LGHGNFGRV. The Proton acceptor role is filled by D134. The segment at 152–181 is activation loop; that stretch reads DFGLSALACHARPDGLLHTACGTPAYVAPE. The region spanning 294–321 is the NAF domain; it reads DKDEPPEVLNAFHLISLSEGFDLSPLFE. The segment at 335 to 356 is PPI; that stretch reads AGGTRFATREAASGVVARLEAL.

It belongs to the protein kinase superfamily. CAMK Ser/Thr protein kinase family. SNF1 subfamily. Mn(2+) is required as a cofactor.

The enzyme catalyses L-seryl-[protein] + ATP = O-phospho-L-seryl-[protein] + ADP + H(+). The catalysed reaction is L-threonyl-[protein] + ATP = O-phospho-L-threonyl-[protein] + ADP + H(+). CIPK serine-threonine protein kinases interact with CBL proteins. Binding of a CBL protein to the regulatory NAF domain of CIPK protein lead to the activation of the kinase in a calcium-dependent manner. This is Putative CBL-interacting protein kinase 27 (CIPK27) from Oryza sativa subsp. japonica (Rice).